Here is a 76-residue protein sequence, read N- to C-terminus: Large ribosomal subunit protein uL24 (76 aa).

Belongs to the universal ribosomal protein uL24 family. As to quaternary structure, part of the 50S ribosomal subunit.

One of two assembly initiator proteins, it binds directly to the 5'-end of the 23S rRNA, where it nucleates assembly of the 50S subunit. In terms of biological role, one of the proteins that surrounds the polypeptide exit tunnel on the outside of the subunit. This is Large ribosomal subunit protein uL24 from Campylobacter hominis (strain ATCC BAA-381 / DSM 21671 / CCUG 45161 / LMG 19568 / NCTC 13146 / CH001A).